The chain runs to 275 residues: Non-heme chloroperoxidase CPO-A1 (275 aa).

The AB hydrolase-1 domain occupies 22–255; the sequence is PVVFIHGWPL…KVYEGSSHGI (234 aa). Catalysis depends on charge relay system residues serine 95, aspartate 224, and histidine 253.

Belongs to the AB hydrolase superfamily. Bacterial non-heme haloperoxidase / perhydrolase family. Homodimer.

Its activity is regulated as follows. Brominating activity not inhibited by azide, peroxidase activity stimulated by bromide. Functionally, may be a chlorinating enzyme involved in 7-chlorotetracycline biosynthesis. Able to brominate as well. This is Non-heme chloroperoxidase CPO-A1 (bpoA1) from Kitasatospora aureofaciens (Streptomyces aureofaciens).